A 628-amino-acid polypeptide reads, in one-letter code: F-box only protein 21 (628 aa).

An F-box domain is found at 28-84; that stretch reads SCLVNLPGEVLEYILCCGSLTAADIGRVSSTCRRLRELCQSSGKVWKEQFRVRWPSL.

Directly interacts with SKP1 and CUL1.

Its function is as follows. Substrate-recognition component of the SCF (SKP1-CUL1-F-box protein)-type E3 ubiquitin ligase complex. The protein is F-box only protein 21 (FBXO21) of Homo sapiens (Human).